The chain runs to 541 residues: Chaperonin GroEL 1 (541 aa).

Residues 29–32 (TIGP), 86–90 (DGTTT), Gly-415, 479–481 (NAA), and Asp-495 each bind ATP.

The protein belongs to the chaperonin (HSP60) family. As to quaternary structure, forms a cylinder of 14 subunits composed of two heptameric rings stacked back-to-back. Interacts with the co-chaperonin GroES.

It is found in the cytoplasm. The enzyme catalyses ATP + H2O + a folded polypeptide = ADP + phosphate + an unfolded polypeptide.. Functionally, together with its co-chaperonin GroES, plays an essential role in assisting protein folding. The GroEL-GroES system forms a nano-cage that allows encapsulation of the non-native substrate proteins and provides a physical environment optimized to promote and accelerate protein folding. This is Chaperonin GroEL 1 from Streptomyces coelicolor (strain ATCC BAA-471 / A3(2) / M145).